A 123-amino-acid chain; its full sequence is Large ribosomal subunit protein bL17 (123 aa).

It belongs to the bacterial ribosomal protein bL17 family. As to quaternary structure, part of the 50S ribosomal subunit. Contacts protein L32.

The sequence is that of Large ribosomal subunit protein bL17 from Borreliella afzelii (strain PKo) (Borrelia afzelii).